We begin with the raw amino-acid sequence, 29 residues long: Snaclec multactivase regulatory subunit (29 aa).

One can recognise a C-type lectin domain in the interval 1–29; sequence DCLPGWSVYEGRCYKVFNQKTWKAAEKFC. An intrachain disulfide couples cysteine 2 to cysteine 13.

The protein belongs to the snaclec family. In terms of assembly, heterodimer of a metalloproteinase subunit and a regulatory subunit comprising two homologous polypeptides disulfide-linked. Expressed by the venom gland.

It is found in the secreted. Functionally, multactivase, a carinactivase-like calcium-dependent prothrombin activator, activates prothrombin via recognition of the calcium ion bound conformation of its gamma-carboxyglutamic acid (GLA) domain, and the subsequent conversion of prothrombin to active thrombin is catalyzed by the catalytic subunit. The polypeptide is Snaclec multactivase regulatory subunit (Echis multisquamatus (Central Asian sand viper)).